The primary structure comprises 460 residues: uncharacterized protein (460 aa).

The region spanning 9-67 (NFKKNDIFEAEVLDLTHEGQGVVKIDSFPFFVDNALPGERIKMHVLKVGKSFGFGRVDE) is the TRAM domain. Positions 292, 321, 342, and 390 each coordinate S-adenosyl-L-methionine. Cys-417 acts as the Nucleophile in catalysis.

The protein belongs to the class I-like SAM-binding methyltransferase superfamily. RNA M5U methyltransferase family.

This is an uncharacterized protein from Lactococcus lactis subsp. lactis (strain IL1403) (Streptococcus lactis).